Reading from the N-terminus, the 350-residue chain is Holliday junction branch migration complex subunit RuvB (350 aa).

The interval 1–183 (MSAERLVNPH…FVAVHRLVFY (183 aa)) is large ATPase domain (RuvB-L). ATP-binding positions include L22, R23, G64, K67, T68, S69, 130–132 (EDF), R173, Y183, and R220. Mg(2+) is bound at residue T68. Positions 184–254 (SDDAMTEIVS…VARDALAQLE (71 aa)) are small ATPAse domain (RuvB-S). The head domain (RuvB-H) stretch occupies residues 257 to 350 (ELGLDENDRR…ESGPQQATLF (94 aa)). DNA is bound by residues R312 and R317. The interval 331 to 350 (YPERTLPADDESGPQQATLF) is disordered.

It belongs to the RuvB family. In terms of assembly, homohexamer. Forms an RuvA(8)-RuvB(12)-Holliday junction (HJ) complex. HJ DNA is sandwiched between 2 RuvA tetramers; dsDNA enters through RuvA and exits via RuvB. An RuvB hexamer assembles on each DNA strand where it exits the tetramer. Each RuvB hexamer is contacted by two RuvA subunits (via domain III) on 2 adjacent RuvB subunits; this complex drives branch migration. In the full resolvosome a probable DNA-RuvA(4)-RuvB(12)-RuvC(2) complex forms which resolves the HJ.

The protein resides in the cytoplasm. The catalysed reaction is ATP + H2O = ADP + phosphate + H(+). Its function is as follows. The RuvA-RuvB-RuvC complex processes Holliday junction (HJ) DNA during genetic recombination and DNA repair, while the RuvA-RuvB complex plays an important role in the rescue of blocked DNA replication forks via replication fork reversal (RFR). RuvA specifically binds to HJ cruciform DNA, conferring on it an open structure. The RuvB hexamer acts as an ATP-dependent pump, pulling dsDNA into and through the RuvAB complex. RuvB forms 2 homohexamers on either side of HJ DNA bound by 1 or 2 RuvA tetramers; 4 subunits per hexamer contact DNA at a time. Coordinated motions by a converter formed by DNA-disengaged RuvB subunits stimulates ATP hydrolysis and nucleotide exchange. Immobilization of the converter enables RuvB to convert the ATP-contained energy into a lever motion, pulling 2 nucleotides of DNA out of the RuvA tetramer per ATP hydrolyzed, thus driving DNA branch migration. The RuvB motors rotate together with the DNA substrate, which together with the progressing nucleotide cycle form the mechanistic basis for DNA recombination by continuous HJ branch migration. Branch migration allows RuvC to scan DNA until it finds its consensus sequence, where it cleaves and resolves cruciform DNA. In Chloroflexus aurantiacus (strain ATCC 29366 / DSM 635 / J-10-fl), this protein is Holliday junction branch migration complex subunit RuvB.